The primary structure comprises 129 residues: NADPH-dependent 7-cyano-7-deazaguanine reductase (129 aa).

The active-site Thioimide intermediate is cysteine 34. Aspartate 41 (proton donor) is an active-site residue. Residues 56–58 (VEL) and 75–76 (HE) each bind substrate.

It belongs to the GTP cyclohydrolase I family. QueF type 1 subfamily.

Its subcellular location is the cytoplasm. The catalysed reaction is 7-aminomethyl-7-carbaguanine + 2 NADP(+) = 7-cyano-7-deazaguanine + 2 NADPH + 3 H(+). The protein operates within tRNA modification; tRNA-queuosine biosynthesis. In terms of biological role, catalyzes the NADPH-dependent reduction of 7-cyano-7-deazaguanine (preQ0) to 7-aminomethyl-7-deazaguanine (preQ1). The chain is NADPH-dependent 7-cyano-7-deazaguanine reductase from Thioalkalivibrio sulfidiphilus (strain HL-EbGR7).